The chain runs to 581 residues: Oligo-1,6-glucosidase IMA5 (581 aa).

Asp210 (nucleophile) is an active-site residue. Residue Glu272 is the Proton donor of the active site.

Belongs to the glycosyl hydrolase 13 family.

The enzyme catalyses Hydrolysis of (1-&gt;6)-alpha-D-glucosidic linkages in some oligosaccharides produced from starch and glycogen by alpha-amylase, and in isomaltose.. Its function is as follows. Alpha-glucosidase with specificity for isomaltose, maltose, and palatinose. This chain is Oligo-1,6-glucosidase IMA5 (IMA5), found in Saccharomyces cerevisiae (strain ATCC 204508 / S288c) (Baker's yeast).